A 496-amino-acid chain; its full sequence is ATP-dependent protease ATPase subunit HslU2 (496 aa).

The transit peptide at methionine 1–cysteine 10 directs the protein to the mitochondrion. ATP is bound by residues valine 51 and glycine 94–glutamate 99. A compositionally biased stretch (low complexity) spans glycine 177–serine 191. The interval glycine 177–asparagine 204 is disordered. The ATP site is built by aspartate 308, glutamate 374, and arginine 446.

It belongs to the ClpX chaperone family. HslU subfamily. As to quaternary structure, a double ring-shaped homohexamer of HslV is capped on each side by a ring-shaped HslU homohexamer. The assembly of the HslU/HslV complex (HslVU) is dependent on binding of ATP.

Its subcellular location is the mitochondrion matrix. It is found in the kinetoplast. ATPase subunit of a proteasome-like degradation complex; this subunit has chaperone activity. The binding of ATP and its subsequent hydrolysis by HslU are essential for unfolding of protein substrates subsequently hydrolyzed by HslV. HslU recognizes the N-terminal part of its protein substrates and unfolds these before they are guided to HslV for hydrolysis. The HslVU protease complex functions in mitochondrial DNA replication by regulating DNA helicase PIF2 protein levels. In Trypanosoma brucei brucei (strain 927/4 GUTat10.1), this protein is ATP-dependent protease ATPase subunit HslU2 (HslU2).